The sequence spans 211 residues: Large ribosomal subunit protein uL4 (211 aa).

The segment at 44–90 is disordered; sequence ERQGTHSTLTKGEVRGGGKKPWRQKHTGKARTGSTRNPHWTGGGVVF. Over residues 60–72 the composition is skewed to basic residues; the sequence is GGKKPWRQKHTGK.

It belongs to the universal ribosomal protein uL4 family. As to quaternary structure, part of the 50S ribosomal subunit.

In terms of biological role, one of the primary rRNA binding proteins, this protein initially binds near the 5'-end of the 23S rRNA. It is important during the early stages of 50S assembly. It makes multiple contacts with different domains of the 23S rRNA in the assembled 50S subunit and ribosome. Forms part of the polypeptide exit tunnel. The polypeptide is Large ribosomal subunit protein uL4 (Ureaplasma parvum serovar 3 (strain ATCC 27815 / 27 / NCTC 11736)).